We begin with the raw amino-acid sequence, 373 residues long: Mitochondrial nicotinamide adenine dinucleotide transporter 1 (373 aa).

Over 1–80 (MTQTDNPVPN…WVPLSSTQIT (80 aa)) the chain is Mitochondrial matrix. Solcar repeat units follow at residues 75 to 166 (SSTQ…SKKF), 174 to 263 (FDFV…LKVR), and 276 to 364 (INLQ…FRNR). A helical transmembrane segment spans residues 81-101 (ALSGAFAGFLSGVAVCPLDVA). Residues 102 to 141 (KTRLQAQGLQTRFENPYYRGIMGTLSTIVRDEGPRGLYKG) lie on the Mitochondrial intermembrane side of the membrane. Residues 142–162 (LVPIVLGYFPTWMIYFSVYEF) form a helical membrane-spanning segment. Residues 163–176 (SKKFFHGIFPQFDF) are Mitochondrial matrix-facing. Residues 177 to 199 (VAQSCAAITAGAASTTLTNPIWV) traverse the membrane as a helical segment. Residues 200–235 (VKTRLMLQSNLGEHPTHYKGTFDAFRKLFYQEGFKA) lie on the Mitochondrial intermembrane side of the membrane. Residues 236–256 (LYAGLVPSLLGLFHVAIHFPI) form a helical membrane-spanning segment. The Mitochondrial matrix portion of the chain corresponds to 257–280 (YEDLKVRFHCYSRENNTNSINLQR). The chain crosses the membrane as a helical span at residues 281–297 (LIMASSVSKMIASAVTY). The Mitochondrial intermembrane portion of the chain corresponds to 298–335 (PHEILRTRMQLKSDIPDSIQRRLFPLIKATYAQEGLKG). A helical transmembrane segment spans residues 336–358 (FYSGFTTNLVRTIPASAITLVSF). At 359–373 (EYFRNRLENISTMVI) the chain is on the mitochondrial matrix side.

It belongs to the mitochondrial carrier (TC 2.A.29) family.

The protein resides in the mitochondrion inner membrane. It catalyses the reaction dAMP(in) + NAD(+)(out) = dAMP(out) + NAD(+)(in). The catalysed reaction is dGMP(in) + NAD(+)(out) = dGMP(out) + NAD(+)(in). The enzyme catalyses GMP(in) + NAD(+)(out) = GMP(out) + NAD(+)(in). It carries out the reaction AMP(in) + NAD(+)(out) = AMP(out) + NAD(+)(in). It catalyses the reaction deamido-NAD(+)(in) + NAD(+)(out) = deamido-NAD(+)(out) + NAD(+)(in). Functionally, mitochondrial inner membrane carrier protein that mediates the import of NAD(+) into mitochondria. Can transport NAD(+) by unidirectional transport or by exchange with intramitochondrially generated dAMP and dGMP. Also able to transport NAD(+) by exchange with AMP, GMP or deamido-NAD (+) in vitro. In Saccharomyces cerevisiae (strain ATCC 204508 / S288c) (Baker's yeast), this protein is Mitochondrial nicotinamide adenine dinucleotide transporter 1 (YIA6).